Consider the following 67-residue polypeptide: Probable Sec-independent protein translocase protein TatE (67 aa).

A helical transmembrane segment spans residues methionine 1–glycine 21. Residues glutamate 46–aspartate 67 are disordered.

It belongs to the TatA/E family. TatE subfamily.

The protein resides in the cell inner membrane. In terms of biological role, part of the twin-arginine translocation (Tat) system that transports large folded proteins containing a characteristic twin-arginine motif in their signal peptide across membranes. TatE shares overlapping functions with TatA. The chain is Probable Sec-independent protein translocase protein TatE from Pantoea vagans (strain C9-1) (Pantoea agglomerans (strain C9-1)).